The primary structure comprises 687 residues: RNA-binding protein VTS1 (687 aa).

Positions 1-10 (MASHTLRPHR) are enriched in basic residues. 3 disordered regions span residues 1 to 115 (MASH…TPEA), 248 to 341 (AAAK…PGIG), and 526 to 598 (SPFN…AGVA). Polar residues predominate over residues 29 to 41 (TRQSLGPPTSGNS). Low complexity predominate over residues 52–68 (GLASPSSPSQPRHVSSS). Over residues 287–301 (GLESNMSGRSRSKSP) the composition is skewed to polar residues. Residues 305 to 324 (PRPKSTDFSGKPRESLRRES) are compositionally biased toward basic and acidic residues. The span at 526-539 (SPFNASAPSLQPGL) shows a compositional bias: polar residues. The segment covering 550–566 (QSSHLNQHYNQHQQQHQ) has biased composition (low complexity). Gly residues predominate over residues 585–597 (QTGGGGAGGGAGV). The SAM domain maps to 606-667 (KVLEDVPNWL…LKVFYNVRTK (62 aa)).

The protein belongs to the VTS1 family. In terms of assembly, monomer. Binds to RNA.

The protein resides in the cytoplasm. Its subcellular location is the cytosol. It localises to the P-body. Its function is as follows. RNA-binding protein involved in post-transcriptional regulation through transcript degradation. This is RNA-binding protein VTS1 from Cryptococcus neoformans var. grubii serotype A (strain H99 / ATCC 208821 / CBS 10515 / FGSC 9487) (Filobasidiella neoformans var. grubii).